A 524-amino-acid chain; its full sequence is Probable inorganic phosphate transporter 1-2 (524 aa).

Residues Met-1–Ala-24 lie on the Cytoplasmic side of the membrane. The chain crosses the membrane as a helical span at residues Ile-25–Val-45. Topologically, residues Thr-46 to Ala-70 are extracellular. The helical transmembrane segment at Ala-71 to Leu-91 threads the bilayer. The Cytoplasmic portion of the chain corresponds to Gly-92–Lys-99. A helical transmembrane segment spans residues Val-100–Gly-120. Residues Asn-121–Cys-131 are Extracellular-facing. A helical transmembrane segment spans residues Phe-132 to Met-152. Topologically, residues Ser-153–Arg-161 are cytoplasmic. A helical transmembrane segment spans residues Gly-162–Val-182. At Ala-183 to Val-211 the chain is on the extracellular side. Residues Asp-212 to Trp-232 traverse the membrane as a helical segment. Over Arg-233 to Arg-292 the chain is Cytoplasmic. A helical transmembrane segment spans residues His-293–Ser-313. The Extracellular portion of the chain corresponds to Gln-314–Thr-348. Residues Leu-349–Ile-369 form a helical membrane-spanning segment. Over Gly-370–Arg-371 the chain is Cytoplasmic. The helical transmembrane segment at Phe-372–Pro-392 threads the bilayer. Over Tyr-393–Arg-402 the chain is Extracellular. A helical transmembrane segment spans residues Ile-403 to Thr-423. Residues Thr-424 to His-441 are Cytoplasmic-facing. Residues Gly-442–Ala-462 form a helical membrane-spanning segment. The Extracellular portion of the chain corresponds to Ala-463–Ser-484. The helical transmembrane segment at Leu-485–Pro-505 threads the bilayer. The Cytoplasmic segment spans residues Lys-506 to Lys-524.

It belongs to the major facilitator superfamily. Phosphate:H(+) symporter (TC 2.A.1.9) family. Root specific, especially in trichoblasts. In mature plants, localized in root cortical cells and young lateral roots.

The protein resides in the membrane. Its function is as follows. High-affinity transporter for external inorganic phosphate. The sequence is that of Probable inorganic phosphate transporter 1-2 (PHT1-2) from Arabidopsis thaliana (Mouse-ear cress).